Consider the following 166-residue polypeptide: Small ribosomal subunit protein uS5 (166 aa).

The S5 DRBM domain maps to 12 to 75 (YIEKLVQVNR…EAARRNMIQV (64 aa)).

This sequence belongs to the universal ribosomal protein uS5 family. Part of the 30S ribosomal subunit. Contacts proteins S4 and S8.

Its function is as follows. With S4 and S12 plays an important role in translational accuracy. Functionally, located at the back of the 30S subunit body where it stabilizes the conformation of the head with respect to the body. In Pseudomonas fluorescens (strain ATCC BAA-477 / NRRL B-23932 / Pf-5), this protein is Small ribosomal subunit protein uS5.